The primary structure comprises 57 residues: DNA-directed RNA polymerase subunit Rpo6 (57 aa).

This sequence belongs to the archaeal Rpo6/eukaryotic RPB6 RNA polymerase subunit family. In terms of assembly, part of the RNA polymerase complex.

It localises to the cytoplasm. It catalyses the reaction RNA(n) + a ribonucleoside 5'-triphosphate = RNA(n+1) + diphosphate. DNA-dependent RNA polymerase (RNAP) catalyzes the transcription of DNA into RNA using the four ribonucleoside triphosphates as substrates. The chain is DNA-directed RNA polymerase subunit Rpo6 from Thermococcus onnurineus (strain NA1).